The primary structure comprises 107 residues: 2Fe-2S ferredoxin CtmE (107 aa).

Positions 3–106 (VKVTYVDSAN…GLVIHTLEPE (104 aa)) constitute a 2Fe-2S ferredoxin-type domain. [2Fe-2S] cluster contacts are provided by cysteine 41, cysteine 47, cysteine 50, and cysteine 87.

This sequence belongs to the adrenodoxin/putidaredoxin family. It depends on [2Fe-2S] cluster as a cofactor.

It functions in the pathway terpene metabolism; monoterpene degradation. In terms of biological role, involved in the degradation of the cyclic monoterpene limonene. Probably part of an electron transfer system involved in the oxidation of limonene to perillyl alcohol. The chain is 2Fe-2S ferredoxin CtmE from Castellaniella defragrans (strain DSM 12143 / CCUG 39792 / 65Phen) (Alcaligenes defragrans).